Reading from the N-terminus, the 125-residue chain is Large ribosomal subunit protein bL12 (125 aa).

Belongs to the bacterial ribosomal protein bL12 family. Homodimer. Part of the ribosomal stalk of the 50S ribosomal subunit. Forms a multimeric L10(L12)X complex, where L10 forms an elongated spine to which 2 to 4 L12 dimers bind in a sequential fashion. Binds GTP-bound translation factors.

In terms of biological role, forms part of the ribosomal stalk which helps the ribosome interact with GTP-bound translation factors. Is thus essential for accurate translation. The sequence is that of Large ribosomal subunit protein bL12 from Thermoanaerobacter sp. (strain X514).